The sequence spans 270 residues: uncharacterized protein (270 aa).

This sequence to T.pallidum TP_0127, TP_0315 and TP_0618.

This is an uncharacterized protein from Treponema pallidum (strain Nichols).